A 54-amino-acid chain; its full sequence is MLYWALVFLVVAIIAGALGFGGIAGTSAGIAQILFFIFLAFLVISLLAGLFRRA.

The next 2 helical transmembrane spans lie at 4–24 (WALVFLVVAIIAGALGFGGIA) and 30–50 (IAQILFFIFLAFLVISLLAGL).

This sequence belongs to the UPF0391 family.

It is found in the cell membrane. In Mesorhizobium japonicum (strain LMG 29417 / CECT 9101 / MAFF 303099) (Mesorhizobium loti (strain MAFF 303099)), this protein is UPF0391 membrane protein msr3702.